We begin with the raw amino-acid sequence, 88 residues long: UPF0335 protein Mnod_5968 (88 aa).

It belongs to the UPF0335 family.

This Methylobacterium nodulans (strain LMG 21967 / CNCM I-2342 / ORS 2060) protein is UPF0335 protein Mnod_5968.